The sequence spans 306 residues: UDP-3-O-acyl-N-acetylglucosamine deacetylase (306 aa).

Histidine 79, histidine 238, and aspartate 242 together coordinate Zn(2+). Histidine 265 (proton donor) is an active-site residue.

This sequence belongs to the LpxC family. It depends on Zn(2+) as a cofactor.

The enzyme catalyses a UDP-3-O-[(3R)-3-hydroxyacyl]-N-acetyl-alpha-D-glucosamine + H2O = a UDP-3-O-[(3R)-3-hydroxyacyl]-alpha-D-glucosamine + acetate. It functions in the pathway glycolipid biosynthesis; lipid IV(A) biosynthesis; lipid IV(A) from (3R)-3-hydroxytetradecanoyl-[acyl-carrier-protein] and UDP-N-acetyl-alpha-D-glucosamine: step 2/6. Catalyzes the hydrolysis of UDP-3-O-myristoyl-N-acetylglucosamine to form UDP-3-O-myristoylglucosamine and acetate, the committed step in lipid A biosynthesis. This is UDP-3-O-acyl-N-acetylglucosamine deacetylase from Shewanella denitrificans (strain OS217 / ATCC BAA-1090 / DSM 15013).